Consider the following 460-residue polypeptide: Cysteine--tRNA ligase (460 aa).

A Zn(2+)-binding site is contributed by Cys-28. Residues 30–40 carry the 'HIGH' region motif; it reads MTVYDYCHLGH. The Zn(2+) site is built by Cys-209, His-234, and Glu-238. Residues 266–270 carry the 'KMSKS' region motif; it reads KMSKS. Lys-269 contacts ATP.

It belongs to the class-I aminoacyl-tRNA synthetase family. As to quaternary structure, monomer. Zn(2+) serves as cofactor.

The protein resides in the cytoplasm. The catalysed reaction is tRNA(Cys) + L-cysteine + ATP = L-cysteinyl-tRNA(Cys) + AMP + diphosphate. This Pseudomonas putida (strain GB-1) protein is Cysteine--tRNA ligase.